A 148-amino-acid chain; its full sequence is Putative carbonic anhydrase (148 aa).

Residues 1–146 enclose the Alpha-carbonic anhydrase domain; that stretch reads CLKRLQPGEM…LNGRTVFEVH (146 aa).

The protein belongs to the alpha-carbonic anhydrase family. The cofactor is Zn(2+). As to expression, component of the acid-insoluble organic matrix of the aragonitic skeleton (at protein level).

It is found in the secreted. The catalysed reaction is hydrogencarbonate + H(+) = CO2 + H2O. Reversible hydration of carbon dioxide. The protein is Putative carbonic anhydrase of Acropora millepora (Staghorn coral).